The sequence spans 194 residues: Outer-membrane lipoprotein LolB (194 aa).

The N-terminal stretch at 1-18 (MTLFLRIFTFGCLLLLAG) is a signal peptide. Cys19 carries N-palmitoyl cysteine lipidation. Residue Cys19 is the site of S-diacylglycerol cysteine attachment.

The protein belongs to the LolB family. As to quaternary structure, monomer.

The protein resides in the cell outer membrane. In terms of biological role, plays a critical role in the incorporation of lipoproteins in the outer membrane after they are released by the LolA protein. The chain is Outer-membrane lipoprotein LolB from Aeromonas salmonicida (strain A449).